Consider the following 270-residue polypeptide: Putative ABC transporter ATP-binding protein MG304 homolog (270 aa).

Residues Leu2 to Thr232 enclose the ABC transporter domain. Gly36–Ser43 is an ATP binding site.

Belongs to the ABC transporter superfamily.

The sequence is that of Putative ABC transporter ATP-binding protein MG304 homolog from Mycoplasma pneumoniae (strain ATCC 29342 / M129 / Subtype 1) (Mycoplasmoides pneumoniae).